A 211-amino-acid chain; its full sequence is Large ribosomal subunit protein bL25 (211 aa).

This sequence belongs to the bacterial ribosomal protein bL25 family. CTC subfamily. Part of the 50S ribosomal subunit; part of the 5S rRNA/L5/L18/L25 subcomplex. Contacts the 5S rRNA. Binds to the 5S rRNA independently of L5 and L18.

Functionally, this is one of the proteins that binds to the 5S RNA in the ribosome where it forms part of the central protuberance. This Xanthomonas axonopodis pv. citri (strain 306) protein is Large ribosomal subunit protein bL25.